A 496-amino-acid chain; its full sequence is Glycerol kinase (496 aa).

ADP is bound at residue threonine 12. Residues threonine 12, threonine 13, and serine 14 each contribute to the ATP site. Threonine 12 provides a ligand contact to sn-glycerol 3-phosphate. Arginine 16 contacts ADP. 3 residues coordinate sn-glycerol 3-phosphate: arginine 82, glutamate 83, and tyrosine 134. The glycerol site is built by arginine 82, glutamate 83, and tyrosine 134. Histidine 230 is modified (phosphohistidine; by HPr). Aspartate 244 lines the sn-glycerol 3-phosphate pocket. Aspartate 244 and glutamine 245 together coordinate glycerol. Positions 266 and 309 each coordinate ADP. The ATP site is built by threonine 266, glycine 309, glutamine 313, and glycine 410. 2 residues coordinate ADP: glycine 410 and asparagine 414.

Belongs to the FGGY kinase family. As to quaternary structure, homotetramer and homodimer (in equilibrium). Post-translationally, the phosphoenolpyruvate-dependent sugar phosphotransferase system (PTS), including enzyme I, and histidine-containing protein (HPr) are required for the phosphorylation, which leads to the activation of the enzyme.

It carries out the reaction glycerol + ATP = sn-glycerol 3-phosphate + ADP + H(+). It participates in polyol metabolism; glycerol degradation via glycerol kinase pathway; sn-glycerol 3-phosphate from glycerol: step 1/1. Its activity is regulated as follows. Activated by phosphorylation and inhibited by fructose 1,6-bisphosphate (FBP). In terms of biological role, key enzyme in the regulation of glycerol uptake and metabolism. Catalyzes the phosphorylation of glycerol to yield sn-glycerol 3-phosphate. This is Glycerol kinase from Bacillus subtilis (strain 168).